Here is an 87-residue protein sequence, read N- to C-terminus: Large ribosomal subunit protein bL31B (87 aa).

This sequence belongs to the bacterial ribosomal protein bL31 family. Type B subfamily. In terms of assembly, part of the 50S ribosomal subunit.

This is Large ribosomal subunit protein bL31B from Burkholderia ambifaria (strain MC40-6).